The following is a 430-amino-acid chain: MCSVSELLDMENFQGDLTDVVRGIGGHVLSPETPPSNIWPLPLSHPTPSPSDLNINPFGDPFVSMDDPLLQELNSITNSGYFSTVGDNNNNIHNNNGFLVPKVFEEDHIKSQCSIFPRIRISHSNIIHDSSPCNSPAMSAHVVAAAAAASPRGIINVDTNSPRNCLLVDGTTFSSQIQISSPRNLGLKRRKSQAKKVVCIPAPAAMNSRSSGEVVPSDLWAWRKYGQKPIKGSPFPRGYYRCSSSKGCSARKQVERSRTDPNMLVITYTSEHNHPWPIQRNALAGSTRSSTSSSSNPNPSKPSTANVNSSSIGSQNTIYLPSSTTPPPTLSSSAIKDERGDDMELENVDDDDDNQIAPYRPELHDHQHQPDDFFADLEELEGDSLSMLLSHGCGGDGKDKTTASDGISNFFGWSGDNNYNNYDDQDSRSL.

The WRKY DNA-binding region spans 211–277 (SGEVVPSDLW…YTSEHNHPWP (67 aa)). The interval 283-366 (LAGSTRSSTS…APYRPELHDH (84 aa)) is disordered. Positions 286-306 (STRSSTSSSSNPNPSKPSTAN) are enriched in low complexity. The segment covering 307–319 (VNSSSIGSQNTIY) has biased composition (polar residues). A compositionally biased stretch (acidic residues) spans 340–354 (GDDMELENVDDDDDN).

This sequence belongs to the WRKY group II-e family.

It localises to the nucleus. In terms of biological role, transcription factor. Interacts specifically with the W box (5'-(T)TGAC[CT]-3'), a frequently occurring elicitor-responsive cis-acting element. In Arabidopsis thaliana (Mouse-ear cress), this protein is Probable WRKY transcription factor 14 (WRKY14).